The sequence spans 234 residues: Phosphoglycolate phosphatase (234 aa).

The active-site Nucleophile is aspartate 9. Mg(2+) contacts are provided by aspartate 9 and aspartate 11. Lysine 162 serves as a coordination point for substrate. Residues aspartate 185 and aspartate 189 each contribute to the Mg(2+) site.

This sequence belongs to the archaeal SPP-like hydrolase family. Mg(2+) serves as cofactor.

It carries out the reaction 2-phosphoglycolate + H2O = glycolate + phosphate. In terms of biological role, catalyzes the dephosphorylation of 2-phosphoglycolate. This Methanobrevibacter smithii (strain ATCC 35061 / DSM 861 / OCM 144 / PS) protein is Phosphoglycolate phosphatase.